Here is a 563-residue protein sequence, read N- to C-terminus: Pyruvate decarboxylase isozyme 3 (563 aa).

N-acetylserine is present on serine 2. Pyruvate contacts are provided by aspartate 28 and histidine 115. A Glycyl lysine isopeptide (Lys-Gly) (interchain with G-Cter in ubiquitin) cross-link involves residue lysine 212. Position 223 is a phosphoserine (serine 223). A Glycyl lysine isopeptide (Lys-Gly) (interchain with G-Cter in ubiquitin) cross-link involves residue lysine 233. Phosphothreonine is present on threonine 266. A Glycyl lysine isopeptide (Lys-Gly) (interchain with G-Cter in ubiquitin) cross-link involves residue lysine 269. Threonine 353 carries the post-translational modification Phosphothreonine. Residues threonine 390 and 413 to 415 (GSI) contribute to the thiamine diphosphate site. Aspartate 444 is a Mg(2+) binding site. Residues 445–446 (GS) and 471–476 (NDGYTI) each bind thiamine diphosphate. Mg(2+) contacts are provided by asparagine 471 and glycine 473. Glutamate 477 is a binding site for pyruvate. Lysine 505 participates in a covalent cross-link: Glycyl lysine isopeptide (Lys-Gly) (interchain with G-Cter in ubiquitin). Threonine 522 bears the Phosphothreonine mark.

The protein belongs to the TPP enzyme family. Homotetramer. Mg(2+) serves as cofactor. The cofactor is thiamine diphosphate.

Its subcellular location is the cytoplasm. The enzyme catalyses pyruvate + H(+) = acetaldehyde + CO2. The catalysed reaction is 3-methyl-2-oxobutanoate + H(+) = 2-methylpropanal + CO2. It catalyses the reaction (S)-3-methyl-2-oxopentanoate + H(+) = 2-methylbutanal + CO2. It carries out the reaction indole-3-pyruvate + H(+) = indole-3-acetaldehyde + CO2. The enzyme catalyses 3-phenylpyruvate + H(+) = 2-phenylacetaldehyde + CO2. The catalysed reaction is 2-oxobutanoate + H(+) = propanal + CO2. It catalyses the reaction 2-oxopentanoate + H(+) = butanal + CO2. It carries out the reaction 2 acetaldehyde = acetoin. The enzyme catalyses acetaldehyde + pyruvate + H(+) = acetoin + CO2. The protein operates within fermentation; ethanol fermentation. It functions in the pathway amino-acid degradation; Ehrlich pathway. Its function is as follows. Minor of three pyruvate decarboxylases (PDC1, PDC5, PDC6) implicated in the nonoxidative conversion of pyruvate to acetaldehyde and carbon dioxide during alcoholic fermentation. Most of the produced acetaldehyde is subsequently reduced to ethanol, but some is required for cytosolic acetyl-CoA production for biosynthetic pathways. The enzyme is also one of five 2-oxo acid decarboxylases (PDC1, PDC5, PDC6, ARO10, and THI3) able to decarboxylate more complex 2-oxo acids (alpha-keto-acids) than pyruvate, which seem mainly involved in amino acid catabolism. Here the enzyme catalyzes the decarboxylation of amino acids, which, in a first step, have been transaminated to the corresponding 2-oxo acids. In a third step, the resulting aldehydes are reduced to alcohols, collectively referred to as fusel oils or alcohols. Its preferred substrates are the transaminated amino acids derived from threonine (2-oxobutanoate), norvaline (2-oxopentanoate), valine (3-methyl-2-oxobutanoate, also alpha-keto-isovalerate), isoleucine ((3S)-3-methyl-2-oxopentanoate, also alpha-keto-beta-methylvalerate), phenylalanine (phenylpyruvate), and tryptophan (3-(indol-3-yl)pyruvate), whereas transaminated leucine is no substrate. In a side-reaction the carbanionic intermediate (or active aldehyde) generated by decarboxylation or by activation of an aldehyde can react with an aldehyde via condensation (or carboligation) yielding a 2-hydroxy ketone, collectively called acyloins. The expression level of this protein in the presence of fermentable carbon sources is so low that it cannot compensate for the other two pyruvate decarboxylases to sustain fermentation. This is Pyruvate decarboxylase isozyme 3 (PDC6) from Saccharomyces cerevisiae (strain ATCC 204508 / S288c) (Baker's yeast).